The following is a 238-amino-acid chain: Uridylate kinase (238 aa).

12 to 15 contributes to the ATP binding site; the sequence is KLSG. Gly-54 serves as a coordination point for UMP. ATP-binding residues include Gly-55 and Arg-59. UMP is bound by residues Asp-74 and 135 to 142; that span reads TGNPFFTT. Thr-162, Asn-163, Tyr-168, and Asp-171 together coordinate ATP.

It belongs to the UMP kinase family. In terms of assembly, homohexamer.

It is found in the cytoplasm. It carries out the reaction UMP + ATP = UDP + ADP. It participates in pyrimidine metabolism; CTP biosynthesis via de novo pathway; UDP from UMP (UMPK route): step 1/1. Its activity is regulated as follows. Inhibited by UTP. Catalyzes the reversible phosphorylation of UMP to UDP. This chain is Uridylate kinase, found in Rhodopseudomonas palustris (strain BisA53).